The following is a 136-amino-acid chain: Nucleoside diphosphate kinase (136 aa).

Lysine 10, phenylalanine 58, arginine 86, threonine 92, arginine 104, and asparagine 114 together coordinate ATP. Histidine 117 functions as the Pros-phosphohistidine intermediate in the catalytic mechanism.

The protein belongs to the NDK family. In terms of assembly, homotetramer. Mg(2+) is required as a cofactor.

It is found in the cytoplasm. It carries out the reaction a 2'-deoxyribonucleoside 5'-diphosphate + ATP = a 2'-deoxyribonucleoside 5'-triphosphate + ADP. It catalyses the reaction a ribonucleoside 5'-diphosphate + ATP = a ribonucleoside 5'-triphosphate + ADP. In terms of biological role, major role in the synthesis of nucleoside triphosphates other than ATP. The ATP gamma phosphate is transferred to the NDP beta phosphate via a ping-pong mechanism, using a phosphorylated active-site intermediate. In Mycolicibacterium vanbaalenii (strain DSM 7251 / JCM 13017 / BCRC 16820 / KCTC 9966 / NRRL B-24157 / PYR-1) (Mycobacterium vanbaalenii), this protein is Nucleoside diphosphate kinase.